Reading from the N-terminus, the 834-residue chain is Striatin-interacting protein 2 (834 aa).

Residues 1–48 (MEDPAAPGTGGPPANGNGNGGGKGKQAAPKGREAFRSQRRESEGSVDC) are disordered. Residues 8–24 (GTGGPPANGNGNGGGKG) are compositionally biased toward gly residues. The span at 30 to 43 (KGREAFRSQRRESE) shows a compositional bias: basic and acidic residues. A phosphoserine mark is found at S318, S329, and S354. The interval 321–345 (SYTLDLGESQLAPPPSKLRGRRGSR) is disordered. The tract at residues 360–382 (ERDLFKTEEPATEEEEESAGDGE) is disordered. Residues 369-379 (PATEEEEESAG) are compositionally biased toward acidic residues.

It belongs to the STRIP family. In terms of assembly, part of the core of STRIPAK complexes composed of PP2A catalytic and scaffolding subunits, the striatins (PP2A regulatory subunits), the striatin-associated proteins MOB4, STRIP1 and STRIP2, PDCD10 and members of the STE20 kinases, such as STK24 and STK26. Interacts with CTTNBP2NL.

The protein localises to the cytoplasm. In terms of biological role, plays a role in the regulation of cell morphology and cytoskeletal organization. Required in the control of cell shape. Calmodulin-binding scaffolding protein which is the center of the striatin-interacting phosphatase and kinase (STRIPAK) complexes. STRIPAK complexes have critical roles in protein (de)phosphorylation and are regulators of multiple signaling pathways including Hippo, MAPK, nuclear receptor and cytoskeleton remodeling. Different types of STRIPAK complexes are involved in a variety of biological processes such as cell growth, differentiation, apoptosis, metabolism and immune regulation. In Homo sapiens (Human), this protein is Striatin-interacting protein 2.